The primary structure comprises 414 residues: tRNA (guanine-N(7)-)-methyltransferase non-catalytic subunit WDR4 (414 aa).

An N-acetylalanine modification is found at alanine 2. WD repeat units lie at residues 60 to 99 (QGSD…CLSV), 101 to 140 (TVVR…GGGR), 144 to 184 (GHLS…IESF), and 187 to 227 (GHTE…ELHC). Residues 377 to 414 (EERLQQQLEKKRRQAPPPGPNGPTKKMRAGELAQGCSS) form a disordered region.

It belongs to the WD repeat TRM82 family. As to quaternary structure, non-catalytic component of the METTL1-WDR4 complex, composed of METTL1 and WDR4. Interacts with FEN1; the interaction is direct.

It localises to the nucleus. Its subcellular location is the chromosome. It participates in tRNA modification; N(7)-methylguanine-tRNA biosynthesis. Functionally, non-catalytic component of the METTL1-WDR4 methyltransferase complex required for the formation of N(7)-methylguanine in a subset of RNA species, such as tRNAs, mRNAs and microRNAs (miRNAs). In the METTL1-WDR4 methyltransferase complex, WDR4 acts as a scaffold for tRNA-binding. Required for the formation of N(7)-methylguanine at position 46 (m7G46) in a large subset of tRNAs that contain the 5'-RAGGU-3' motif within the variable loop. M7G46 interacts with C13-G22 in the D-loop to stabilize tRNA tertiary structure and protect tRNAs from decay. Also required for the formation of N(7)-methylguanine at internal sites in a subset of mRNAs. Also required for methylation of a specific subset of miRNAs, such as let-7. Independently of METTL1, also plays a role in genome stability: localizes at the DNA replication site and regulates endonucleolytic activities of FEN1. This is tRNA (guanine-N(7)-)-methyltransferase non-catalytic subunit WDR4 from Bos taurus (Bovine).